Reading from the N-terminus, the 266-residue chain is Protein STAY-GREEN homolog, chloroplastic (266 aa).

The transit peptide at Met-1 to Glu-50 directs the protein to the chloroplast.

This sequence belongs to the staygreen family.

Its subcellular location is the plastid. The protein localises to the chloroplast. Required to trigger chlorophyll degradation during leaf senescence and fruit ripening. The polypeptide is Protein STAY-GREEN homolog, chloroplastic (Capsicum annuum (Capsicum pepper)).